The sequence spans 217 residues: MAAYRADDEYDYLFKVVLIGDSGVGKSNLLSRFTRNEFSLESKSTIGVEFATRSIHVDDKIVKAQIWDTAGQERYRAITSAYYRGAVGALLVYDVTRHVTFENVERWLKELRDHTDANIVIMFVGNKADLRHLRAVSTEDAKAFAERENTFFMETSALESMNVENAFTEVLSQIYRVVSRKALDIGDDPAALPKGQTINVGSKDDVSAVKKVGCCSN.

20–27 (GDSGVGKS) serves as a coordination point for GTP. The Effector region motif lies at 42–50 (SKSTIGVEF). Residues 68–72 (DTAGQ), 126–129 (NKAD), and 156–157 (SA) each bind GTP. 2 S-geranylgeranyl cysteine lipidation sites follow: Cys214 and Cys215.

This sequence belongs to the small GTPase superfamily. Rab family.

The protein resides in the cell membrane. Functionally, intracellular vesicle trafficking and protein transport. This Arabidopsis thaliana (Mouse-ear cress) protein is Ras-related protein RABA1f (RABA1F).